Reading from the N-terminus, the 525-residue chain is Peptide chain release factor 3 (525 aa).

The 268-residue stretch at 9–276 (AKRRTFAIIS…GFTRYAPAPQ (268 aa)) folds into the tr-type G domain. GTP is bound by residues 18–25 (SHPDAGKT), 86–90 (DTPGH), and 140–143 (NKFD).

It belongs to the TRAFAC class translation factor GTPase superfamily. Classic translation factor GTPase family. PrfC subfamily.

It localises to the cytoplasm. Its function is as follows. Increases the formation of ribosomal termination complexes and stimulates activities of RF-1 and RF-2. It binds guanine nucleotides and has strong preference for UGA stop codons. It may interact directly with the ribosome. The stimulation of RF-1 and RF-2 is significantly reduced by GTP and GDP, but not by GMP. This Francisella tularensis subsp. mediasiatica (strain FSC147) protein is Peptide chain release factor 3.